The sequence spans 244 residues: MRIKFLVVLAVICLFAHYASASGMGGDKKPKDAPKPKDAPKPKEVKPVKAESSEYEIEVIKHQKEKTEKKEKEKKTHVETKKEVKKKEKKQIPCSEKLKDEKLDCETKGVPAGYKAIFKFTENEECDWTCDYEALPPPPGAKKDDKKEKKTVKVVKPPKEKPPKKLRKECSGEKVIKFQNCLVKIRGLIAFGDKTKNFDKKFAKLVQGKQKKGAKKAKGGKKAAPKPGPKPGPKQADKPKDAKK.

The first 21 residues, 1-21 (MRIKFLVVLAVICLFAHYASA), serve as a signal peptide directing secretion. 3 disordered regions span residues 23–91 (GMGG…EKKQ), 137–169 (PPPGAKKDDKKEKKTVKVVKPPKEKPPKKLRKE), and 206–244 (VQGKQKKGAKKAKGGKKAAPKPGPKPGPKQADKPKDAKK). Composition is skewed to basic and acidic residues over residues 26–86 (GDKK…EVKK) and 157–169 (PPKEKPPKKLRKE). 2 tandem repeats follow at residues 29 to 34 (KPKDAP) and 35 to 40 (KPKDAP). The interval 29–47 (KPKDAPKPKDAPKPKEVKP) is 3 X 6 AA approximate tandem repeats of K-P-K-D-A-P. The 1-3; approximate repeat unit spans residues 41–47 (KPKEVKP). 2 tandem repeats follow at residues 156–159 (KPPK) and 161–164 (KPPK). Residues 156-168 (KPPKEKPPKKLRK) are 3 X 4 AA approximate tandem repeats of K-P-P-K. The stretch at 165-168 (KLRK) is one 2-3; approximate repeat. Over residues 209–224 (KQKKGAKKAKGGKKAA) the composition is skewed to basic residues. 3 tandem repeats follow at residues 225 to 228 (PKPG), 229 to 232 (PKPG), and 233 to 236 (PKQA). Positions 225–240 (PKPGPKPGPKQADKPK) are 4 X 4 AA approximate tandem repeats of P-K-[PQ]-[GA]. Positions 235-244 (QADKPKDAKK) are enriched in basic and acidic residues. The stretch at 237-240 (DKPK) is one 3-4; approximate repeat.

In terms of tissue distribution, salivary gland.

The protein resides in the secreted. Its function is as follows. Used by the larvae to construct a supramolecular structure, the larval tube. The polypeptide is Salivary gland SP38-40.A protein (SP38-40.A) (Chironomus tentans (Midge)).